The sequence spans 496 residues: Cobyric acid synthase (496 aa).

The 188-residue stretch at 250-437 folds into the GATase cobBQ-type domain; it reads TLKVIAPALP…LHGLFESPQA (188 aa). C331 functions as the Nucleophile in the catalytic mechanism. H429 is a catalytic residue.

It belongs to the CobB/CobQ family. CobQ subfamily.

Its pathway is cofactor biosynthesis; adenosylcobalamin biosynthesis. Functionally, catalyzes amidations at positions B, D, E, and G on adenosylcobyrinic A,C-diamide. NH(2) groups are provided by glutamine, and one molecule of ATP is hydrogenolyzed for each amidation. The protein is Cobyric acid synthase of Hahella chejuensis (strain KCTC 2396).